We begin with the raw amino-acid sequence, 157 residues long: Phosphopantetheine adenylyltransferase (157 aa).

Thr-10 contacts substrate. Residues Thr-10–Phe-11 and His-18 contribute to the ATP site. Positions 42, 74, and 88 each coordinate substrate. ATP-binding positions include Gly-89 to Arg-91, Glu-99, and Asn-124 to Ser-130.

The protein belongs to the bacterial CoaD family. As to quaternary structure, homohexamer. Mg(2+) is required as a cofactor.

It localises to the cytoplasm. It carries out the reaction (R)-4'-phosphopantetheine + ATP + H(+) = 3'-dephospho-CoA + diphosphate. It participates in cofactor biosynthesis; coenzyme A biosynthesis; CoA from (R)-pantothenate: step 4/5. Reversibly transfers an adenylyl group from ATP to 4'-phosphopantetheine, yielding dephospho-CoA (dPCoA) and pyrophosphate. The protein is Phosphopantetheine adenylyltransferase of Helicobacter acinonychis (strain Sheeba).